The following is a 627-amino-acid chain: Polyadenylate-binding protein, cytoplasmic and nuclear (627 aa).

Residues 1–11 (MSAADANQVQE) are compositionally biased toward polar residues. Residues 1-46 (MSAADANQVQESLEKLNLDSAPVASTEETEQTASGETEEAADSAQV) form a disordered region. 4 consecutive RRM domains span residues 51–129 (ASLY…WSQR), 139–216 (GNIF…KHIS), 232–309 (TNVY…RAQK), and 335–412 (VNLF…LAQR). Residues 511 to 535 (DFNNGANGGRQQRGYYPNRNQNQKG) show a composition bias toward low complexity. Positions 511-537 (DFNNGANGGRQQRGYYPNRNQNQKGRQ) are disordered. The region spanning 537–618 (QQKDLAAIIA…ALTAFEEYKK (82 aa)) is the PABC domain.

This sequence belongs to the polyadenylate-binding protein type-1 family.

The protein resides in the cytoplasm. Its subcellular location is the nucleus. Functionally, binds the poly(A) tail of mRNA. Appears to be an important mediator of the multiple roles of the poly(A) tail in mRNA biogenesis, stability and translation. In the nucleus, involved in both mRNA cleavage and polyadenylation. Is also required for efficient mRNA export to the cytoplasm. Acts in concert with a poly(A)-specific nuclease (PAN) to affect poly(A) tail shortening, which may occur concomitantly with either nucleocytoplasmic mRNA transport or translational initiation. In the cytoplasm, stimulates translation initiation and regulates mRNA decay through translation termination-coupled poly(A) shortening, probably mediated by PAN. The polypeptide is Polyadenylate-binding protein, cytoplasmic and nuclear (PAB1) (Debaryomyces hansenii (strain ATCC 36239 / CBS 767 / BCRC 21394 / JCM 1990 / NBRC 0083 / IGC 2968) (Yeast)).